A 120-amino-acid polypeptide reads, in one-letter code: MIF-like protein mif-2 (120 aa).

It belongs to the MIF family.

The sequence is that of MIF-like protein mif-2 (mif-2) from Caenorhabditis elegans.